Reading from the N-terminus, the 293-residue chain is Probable metal transport system membrane protein CPn_0543/CP_0209/CPj0543/CpB0565 (293 aa).

The next 7 helical transmembrane spans lie at 12–32 (LLILLPTFLAALGASVAGGVM), 41–61 (IVSISGSISHAILGGIGLTLW), 68–88 (LSFFPMYGAIVGAIFLALCIG), 101–121 (LIAMIWSVGMAIGIIFISRLP), 140–160 (PSDLYSLGIFDLLVLGIVVLC), 183–203 (LWYFLLLVLTAITIVMLIYVM), and 253–273 (FPVGPTISLLMGLGYTASLCV).

Belongs to the ABC-3 integral membrane protein family.

It localises to the cell inner membrane. Functionally, part of an ATP-driven transport system CPn_0541/CPn_0542/CPn_0543 for a metal. This is Probable metal transport system membrane protein CPn_0543/CP_0209/CPj0543/CpB0565 from Chlamydia pneumoniae (Chlamydophila pneumoniae).